The chain runs to 420 residues: Riboflavin biosynthesis protein RibBA (420 aa).

Residues 1–202 (MTTFGTIEQA…IADLVAYRRR (202 aa)) form a DHBP synthase region. D-ribulose 5-phosphate is bound by residues 28–29 (RE), aspartate 33, 141–145 (RPGHT), and glutamate 165. Glutamate 29 provides a ligand contact to Mg(2+). Residue histidine 144 participates in Mg(2+) binding. The tract at residues 203-420 (TEKQVELVAE…RAVVGDGIGA (218 aa)) is GTP cyclohydrolase II. 253-257 (RVHSE) is a binding site for GTP. Zn(2+)-binding residues include cysteine 258, cysteine 269, and cysteine 271. Residues glutamine 274, 297–299 (EGR), and threonine 319 each bind GTP. The Proton acceptor; for GTP cyclohydrolase activity role is filled by aspartate 331. The active-site Nucleophile; for GTP cyclohydrolase activity is arginine 333. Threonine 354 and lysine 359 together coordinate GTP.

It in the N-terminal section; belongs to the DHBP synthase family. This sequence in the C-terminal section; belongs to the GTP cyclohydrolase II family. Mg(2+) serves as cofactor. Requires Mn(2+) as cofactor. The cofactor is Zn(2+).

The enzyme catalyses D-ribulose 5-phosphate = (2S)-2-hydroxy-3-oxobutyl phosphate + formate + H(+). The catalysed reaction is GTP + 4 H2O = 2,5-diamino-6-hydroxy-4-(5-phosphoribosylamino)-pyrimidine + formate + 2 phosphate + 3 H(+). Its pathway is cofactor biosynthesis; riboflavin biosynthesis; 2-hydroxy-3-oxobutyl phosphate from D-ribulose 5-phosphate: step 1/1. It functions in the pathway cofactor biosynthesis; riboflavin biosynthesis; 5-amino-6-(D-ribitylamino)uracil from GTP: step 1/4. Catalyzes the conversion of D-ribulose 5-phosphate to formate and 3,4-dihydroxy-2-butanone 4-phosphate. Its function is as follows. Catalyzes the conversion of GTP to 2,5-diamino-6-ribosylamino-4(3H)-pyrimidinone 5'-phosphate (DARP), formate and pyrophosphate. The protein is Riboflavin biosynthesis protein RibBA of Salinispora arenicola (strain CNS-205).